A 282-amino-acid polypeptide reads, in one-letter code: ATP phosphoribosyltransferase (282 aa).

The protein belongs to the ATP phosphoribosyltransferase family. Long subfamily. Mg(2+) serves as cofactor.

It is found in the cytoplasm. It carries out the reaction 1-(5-phospho-beta-D-ribosyl)-ATP + diphosphate = 5-phospho-alpha-D-ribose 1-diphosphate + ATP. Its pathway is amino-acid biosynthesis; L-histidine biosynthesis; L-histidine from 5-phospho-alpha-D-ribose 1-diphosphate: step 1/9. Feedback inhibited by histidine. In terms of biological role, catalyzes the condensation of ATP and 5-phosphoribose 1-diphosphate to form N'-(5'-phosphoribosyl)-ATP (PR-ATP). Has a crucial role in the pathway because the rate of histidine biosynthesis seems to be controlled primarily by regulation of HisG enzymatic activity. This chain is ATP phosphoribosyltransferase, found in Pyrobaculum neutrophilum (strain DSM 2338 / JCM 9278 / NBRC 100436 / V24Sta) (Thermoproteus neutrophilus).